The chain runs to 323 residues: Thymidylate synthase (323 aa).

Residues Arg21 and 172–173 (RR) each bind dUMP. The active-site Nucleophile is Cys192. DUMP-binding positions include 214–217 (RSND), Asn225, and 255–257 (HVY). Asp217 is a binding site for (6R)-5,10-methylene-5,6,7,8-tetrahydrofolate. Position 322 (Ala322) interacts with (6R)-5,10-methylene-5,6,7,8-tetrahydrofolate.

Belongs to the thymidylate synthase family. Bacterial-type ThyA subfamily. Homodimer.

The protein resides in the cytoplasm. It carries out the reaction dUMP + (6R)-5,10-methylene-5,6,7,8-tetrahydrofolate = 7,8-dihydrofolate + dTMP. The protein operates within pyrimidine metabolism; dTTP biosynthesis. Catalyzes the reductive methylation of 2'-deoxyuridine-5'-monophosphate (dUMP) to 2'-deoxythymidine-5'-monophosphate (dTMP) while utilizing 5,10-methylenetetrahydrofolate (mTHF) as the methyl donor and reductant in the reaction, yielding dihydrofolate (DHF) as a by-product. This enzymatic reaction provides an intracellular de novo source of dTMP, an essential precursor for DNA biosynthesis. This is Thymidylate synthase from Pseudomonas putida (strain ATCC 47054 / DSM 6125 / CFBP 8728 / NCIMB 11950 / KT2440).